The primary structure comprises 308 residues: tRNA pseudouridine synthase B (308 aa).

Asp44 serves as the catalytic Nucleophile.

Belongs to the pseudouridine synthase TruB family. Type 1 subfamily.

The enzyme catalyses uridine(55) in tRNA = pseudouridine(55) in tRNA. Its function is as follows. Responsible for synthesis of pseudouridine from uracil-55 in the psi GC loop of transfer RNAs. The polypeptide is tRNA pseudouridine synthase B (Bdellovibrio bacteriovorus (strain ATCC 15356 / DSM 50701 / NCIMB 9529 / HD100)).